The primary structure comprises 234 residues: Carbohydrate deacetylase (234 aa).

Mg(2+) is bound by residues His60 and His123.

The protein belongs to the YdjC deacetylase family. Requires Mg(2+) as cofactor.

Functionally, probably catalyzes the deacetylation of acetylated carbohydrates an important step in the degradation of oligosaccharides. The sequence is that of Carbohydrate deacetylase from Bacillus anthracis.